A 574-amino-acid polypeptide reads, in one-letter code: Optineurin (574 aa).

The segment at 1–33 (MSHQPLSCLTEKGDSPTETTGNGPPTLAHPNLD) is disordered. Residues 38–170 (HELLQQMREL…VSELQLKLNS (133 aa)) adopt a coiled-coil conformation. An interaction with Rab8 region spans residues 58-209 (MKLNNQAMKG…GPIRTDSIDT (152 aa)). Residues 176–181 (DSFVEI) carry the LIR motif. Residue Ser177 is modified to Phosphoserine; by TBK1. Ser198 is subject to Phosphoserine. Residues 233–496 (CLREGNQKVE…ALQLAVLLKD (264 aa)) adopt a coiled-coil conformation. Residues 262–286 (AKDRSETETQTEEHKEQEKEEEKSP) are compositionally biased toward basic and acidic residues. The interval 262-292 (AKDRSETETQTEEHKEQEKEEEKSPETVGSE) is disordered. Position 336 is a phosphoserine (Ser336). The interaction with HD stretch occupies residues 405 to 574 (KRRESEKVDK…LLIHVTDCII (170 aa)). The segment at 406–515 (RRESEKVDKV…RQSLMEMQSR (110 aa)) is interaction with MYO6. Positions 468-473 (DFHAER) match the UBAN motif. Ser521 is modified (phosphoserine). The CCHC NOA-type zinc finger occupies 544-574 (QQNIPIHSCPKCGEVLPDIDTLLIHVTDCII). Positions 552, 555, 568, and 572 each coordinate Zn(2+).

In terms of assembly, self-associates. Interacts with HD. Interacts with GTF3A. Interacts with MYO6. Interacts (via UBAN) with ubiquitinated TFRC. Interacts with GTP-bound Rab8 (RAB8A and/or RAB8B). Interacts with TBC1D17. Interacts with TBK1. Interacts with TRAF3. Binds to linear ubiquitin chains. Interacts with LC3 family members MAP1LC3A, MAP1LC3B, GABARAP, GABARAPL1 and GABARAPL2; OPTN phosphorylation increases the association (at least with MAP1LC3B). Interacts with RAB12; the interaction may be indirect. Interacts with TBK1; this interaction leads to the Golgi localization of TBK1 and its subsequent activation. Interacts with palmitoyltransferase ZDHHC17/HIP14; the interaction does not lead to palmitoylation of OPTN. Interacts with CYLD. Interacts with TOM1; the interaction is indirect and is mediated by MYO6, which acts as a bridge between TOM1 and OPTN. Interacts with USP12; the interaction is independent of USP12 deubiquitinase activity and may be involved in regulation of autophagic flux. In terms of processing, phosphorylated by TBK1, leading to restrict bacterial proliferation in case of infection. Present in aqueous humor of the eye (at protein level). Expressed in trabecular meshwork and astrocytes.

It localises to the cytoplasm. It is found in the perinuclear region. The protein resides in the golgi apparatus. Its subcellular location is the trans-Golgi network. The protein localises to the cytoplasmic vesicle. It localises to the autophagosome. It is found in the recycling endosome. Functionally, plays an important role in the maintenance of the Golgi complex, in membrane trafficking, in exocytosis, through its interaction with myosin VI and Rab8. Links myosin VI to the Golgi complex and plays an important role in Golgi ribbon formation. Negatively regulates the induction of IFNB in response to RNA virus infection. Plays a neuroprotective role in the eye and optic nerve. Probably part of the TNF-alpha signaling pathway that can shift the equilibrium toward induction of cell death. May act by regulating membrane trafficking and cellular morphogenesis via a complex that contains Rab8 and huntingtin (HD). Mediates the interaction of Rab8 with the probable GTPase-activating protein TBC1D17 during Rab8-mediated endocytic trafficking, such as that of transferrin receptor (TFRC/TfR); regulates Rab8 recruitment to tubules emanating from the endocytic recycling compartment. Autophagy receptor that interacts directly with both the cargo to become degraded and an autophagy modifier of the MAP1 LC3 family; targets ubiquitin-coated bacteria (xenophagy) and appears to function in the same pathway as SQSTM1 and CALCOCO2/NDP52. The sequence is that of Optineurin (OPTN) from Sus scrofa (Pig).